A 274-amino-acid polypeptide reads, in one-letter code: uncharacterized protein (274 aa).

Belongs to the PhoU family.

This is an uncharacterized protein from Deinococcus radiodurans (strain ATCC 13939 / DSM 20539 / JCM 16871 / CCUG 27074 / LMG 4051 / NBRC 15346 / NCIMB 9279 / VKM B-1422 / R1).